A 306-amino-acid chain; its full sequence is Probable GTP 3',8-cyclase (306 aa).

One can recognise a Radical SAM core domain in the interval 5–232 (RFGRPVTNLR…RRRKYFLPVD (228 aa)). Position 14 (Arg14) interacts with GTP. [4Fe-4S] cluster is bound by residues Cys21 and Cys25. Tyr27 contributes to the S-adenosyl-L-methionine binding site. Cys28 contributes to the [4Fe-4S] cluster binding site. Residue Lys61 coordinates GTP. Gly65 is an S-adenosyl-L-methionine binding site. Thr90 contributes to the GTP binding site. Ser114 provides a ligand contact to S-adenosyl-L-methionine. Lys150 is a GTP binding site. Met189 contacts S-adenosyl-L-methionine. Positions 250 and 253 each coordinate [4Fe-4S] cluster. Residue 255–257 (RLR) coordinates GTP. Residue Cys267 participates in [4Fe-4S] cluster binding.

This sequence belongs to the radical SAM superfamily. MoaA family. [4Fe-4S] cluster serves as cofactor.

The enzyme catalyses GTP + AH2 + S-adenosyl-L-methionine = (8S)-3',8-cyclo-7,8-dihydroguanosine 5'-triphosphate + 5'-deoxyadenosine + L-methionine + A + H(+). The protein operates within cofactor biosynthesis; molybdopterin biosynthesis. Catalyzes the cyclization of GTP to (8S)-3',8-cyclo-7,8-dihydroguanosine 5'-triphosphate. This chain is Probable GTP 3',8-cyclase, found in Pyrococcus abyssi (strain GE5 / Orsay).